A 176-amino-acid chain; its full sequence is Small ribosomal subunit protein uS5 (176 aa).

The region spanning 14-77 (MQEKLIHINR…DQARRWMTSI (64 aa)) is the S5 DRBM domain.

This sequence belongs to the universal ribosomal protein uS5 family. In terms of assembly, part of the 30S ribosomal subunit. Contacts proteins S4 and S8.

Its function is as follows. With S4 and S12 plays an important role in translational accuracy. Located at the back of the 30S subunit body where it stabilizes the conformation of the head with respect to the body. The chain is Small ribosomal subunit protein uS5 from Acidithiobacillus ferrooxidans (strain ATCC 23270 / DSM 14882 / CIP 104768 / NCIMB 8455) (Ferrobacillus ferrooxidans (strain ATCC 23270)).